Here is a 355-residue protein sequence, read N- to C-terminus: Chorismate synthase (355 aa).

Arginine 48 lines the NADP(+) pocket. FMN is bound by residues 126–128 (RSS), glycine 278, 293–297 (KPIPS), and arginine 319.

Belongs to the chorismate synthase family. In terms of assembly, homotetramer. Requires FMNH2 as cofactor.

The enzyme catalyses 5-O-(1-carboxyvinyl)-3-phosphoshikimate = chorismate + phosphate. Its pathway is metabolic intermediate biosynthesis; chorismate biosynthesis; chorismate from D-erythrose 4-phosphate and phosphoenolpyruvate: step 7/7. Functionally, catalyzes the anti-1,4-elimination of the C-3 phosphate and the C-6 proR hydrogen from 5-enolpyruvylshikimate-3-phosphate (EPSP) to yield chorismate, which is the branch point compound that serves as the starting substrate for the three terminal pathways of aromatic amino acid biosynthesis. This reaction introduces a second double bond into the aromatic ring system. In Oleidesulfovibrio alaskensis (strain ATCC BAA-1058 / DSM 17464 / G20) (Desulfovibrio alaskensis), this protein is Chorismate synthase.